A 488-amino-acid polypeptide reads, in one-letter code: Annexin A7 (488 aa).

Over residues 1–18 the composition is skewed to pro residues; that stretch reads MSYPGYPPTGYPPFPGYP. Disordered stretches follow at residues 1–49 and 71–150; these read MSYP…YPQV and GYPG…NTES. A repeat-rich region region spans residues 1–143; sequence MSYPGYPPTG…QYPGGQPTYP (143 aa). Positions 5 to 20 are 3 X 5 AA tandem repeats of G-Y-P-P-X; that stretch reads GYPPTGYPPFPGYPPA. Over residues 89–102 the composition is skewed to gly residues; sequence PGQGFGVPPGGAGF. Annexin repeat units lie at residues 185–256, 257–328, 340–412, and 416–487; these read FDAM…ALFM, PPTY…SMCQ, QMAQ…TILQ, and NRPA…AIVG. Residue K233 is modified to N6-acetyllysine.

This sequence belongs to the annexin family. In terms of assembly, interacts with PDCD6.

Functionally, calcium/phospholipid-binding protein which promotes membrane fusion and is involved in exocytosis. The polypeptide is Annexin A7 (ANXA7) (Macaca fascicularis (Crab-eating macaque)).